The primary structure comprises 228 residues: Phosphoenolpyruvate guanylyltransferase (228 aa).

Thr148, Gly164, and Ser167 together coordinate phosphoenolpyruvate.

This sequence belongs to the CofC family.

The catalysed reaction is phosphoenolpyruvate + GTP + H(+) = enolpyruvoyl-2-diphospho-5'-guanosine + diphosphate. It participates in cofactor biosynthesis; coenzyme F420 biosynthesis. Functionally, guanylyltransferase that catalyzes the activation of phosphoenolpyruvate (PEP) as enolpyruvoyl-2-diphospho-5'-guanosine, via the condensation of PEP with GTP. It is involved in the biosynthesis of coenzyme F420, a hydride carrier cofactor. The polypeptide is Phosphoenolpyruvate guanylyltransferase (Thermomonospora curvata (strain ATCC 19995 / DSM 43183 / JCM 3096 / KCTC 9072 / NBRC 15933 / NCIMB 10081 / Henssen B9)).